A 342-amino-acid chain; its full sequence is Aquaporin-7 (342 aa).

Residues 1 to 36 lie on the Cytoplasmic side of the membrane; the sequence is MVQTSRHRRSTRGSKMVSWSVMAKIQEILQKKMVRE. The residue at position 20 (serine 20) is a Phosphoserine. A helical membrane pass occupies residues 37–54; that stretch reads FLAEFMSTYVMMVFGLGS. The Extracellular portion of the chain corresponds to 55-67; the sequence is VAHMVLNKKYGSY. Residues 68–85 traverse the membrane as a helical segment; sequence LGVNLGFGFGVTMGVHVA. Residues 86–89 are Cytoplasmic-facing; it reads GHIS. An intramembrane region (discontinuously helical) is located at residues 90–103; the sequence is GAHMNAAVTFANCA. The NPA 1 motif lies at 94 to 96; it reads NAA. Residues 104–111 are Cytoplasmic-facing; that stretch reads LGRVPWRK. A helical transmembrane segment spans residues 112–132; sequence FPVYVLGQFLGSFLAAATIYT. The Extracellular segment spans residues 133–167; sequence LFYTAILHFSGGQLMVTGPVATAGIFATYLPDHMT. The chain crosses the membrane as a helical span at residues 168–188; the sequence is LWRGFLNEAWLTGMLQLCLFA. Topologically, residues 189–200 are cytoplasmic; that stretch reads ITDQENNAALPG. The chain crosses the membrane as a helical span at residues 201–217; that stretch reads TQALVIGILVVIIGVSL. Residues 218–221 are Extracellular-facing; sequence GMNT. An intramembrane region (discontinuously helical) is located at residues 222 to 235; it reads GYAINPSRDLPPRV. The short motif at 226–228 is the NPA 2 element; sequence NPS. At 236–253 the chain is on the extracellular side; it reads FTFIAGWGKEVFSEGENW. A helical transmembrane segment spans residues 254–275; it reads WWVPVVAPLLGACLGGIIYLVF. Topologically, residues 276–342 are cytoplasmic; it reads IGSTTPREPL…LHESMALGHF (67 aa).

This sequence belongs to the MIP/aquaporin (TC 1.A.8) family. Homotetramer; each monomer provides an independent glycerol/water pore. Two homotetramers on opposing membranes can dimerize, forming a cell-cell junction. Interacts with PLIN1. Phosphorylation by PKA could prevent the interaction with PLIN1.

The protein resides in the cell membrane. The protein localises to the cytoplasmic vesicle membrane. It localises to the lipid droplet. The enzyme catalyses glycerol(in) = glycerol(out). It catalyses the reaction H2O(in) = H2O(out). It carries out the reaction urea(in) = urea(out). Its activity is regulated as follows. Glycerol transport is regulated by pH, with the porin being permeable to glycerol at pH 7.4 but not at pH 5.5. Water permeability, however, is not influenced by pH. Its function is as follows. Aquaglyceroporins form homotetrameric transmembrane channels, with each monomer independently mediating glycerol and water transport across the plasma membrane along their osmotic gradient. Could also be permeable to urea. Mediates the efflux of glycerol, formed upon triglyceride hydrolysis, to avoid its accumulation in adipocytes and to make it available to other tissues. In the kidney, mediates the reabsorption of glycerol, preventing its loss in urine, again participating to energy homeostasis. In pancreatic beta cells, it also mediates the efflux of glycerol, regulating its intracellular levels. In Macaca fascicularis (Crab-eating macaque), this protein is Aquaporin-7 (AQP7).